A 135-amino-acid polypeptide reads, in one-letter code: MLLKSLFLLFLTAIAFASELQIGILTSVPDDKCKVKSKPGDLISVHYEGKLEDGTVFDSSYSRGQPISFQLGIGQVIQGWDQGLTRMCIGEKRKLTIPSHLAYGDRGVGPIPAKATLVFVAELVDIAGSSKHDEL.

An N-terminal signal peptide occupies residues 1-17 (MLLKSLFLLFLTAIAFA). The region spanning 40-127 (GDLISVHYEG…VFVAELVDIA (88 aa)) is the PPIase FKBP-type domain. The Prevents secretion from ER motif lies at 132-135 (HDEL).

This sequence belongs to the FKBP-type PPIase family. FKBP2 subfamily.

The protein resides in the endoplasmic reticulum. The catalysed reaction is [protein]-peptidylproline (omega=180) = [protein]-peptidylproline (omega=0). Its activity is regulated as follows. Inhibited by both FK506 and rapamycin. Its function is as follows. PPIases accelerate the folding of proteins. It catalyzes the cis-trans isomerization of proline imidic peptide bonds in oligopeptides. This is FK506-binding protein 2 (FPR2) from Debaryomyces hansenii (strain ATCC 36239 / CBS 767 / BCRC 21394 / JCM 1990 / NBRC 0083 / IGC 2968) (Yeast).